Consider the following 123-residue polypeptide: Putative iron-sulfur cluster insertion protein ErpA (123 aa).

Cysteine 51, cysteine 115, and cysteine 117 together coordinate iron-sulfur cluster.

This sequence belongs to the HesB/IscA family. In terms of assembly, homodimer. Iron-sulfur cluster is required as a cofactor.

In terms of biological role, required for insertion of 4Fe-4S clusters. The chain is Putative iron-sulfur cluster insertion protein ErpA from Bordetella bronchiseptica (strain ATCC BAA-588 / NCTC 13252 / RB50) (Alcaligenes bronchisepticus).